Consider the following 132-residue polypeptide: Large ribosomal subunit protein uL22c (132 aa).

It belongs to the universal ribosomal protein uL22 family. Part of the 50S ribosomal subunit.

It is found in the plastid. The protein resides in the chloroplast. Functionally, this protein binds specifically to 23S rRNA. In terms of biological role, the globular domain of the protein is located near the polypeptide exit tunnel on the outside of the subunit, while an extended beta-hairpin is found that lines the wall of the exit tunnel in the center of the 70S ribosome. In Staurastrum punctulatum (Green alga), this protein is Large ribosomal subunit protein uL22c (rpl22).